The following is a 373-amino-acid chain: Tomoregulin-1 (373 aa).

The N-terminal stretch at 1-36 (MGAQAPLRLPAAPPLAVCGYTSVLLLFAFCLPGSGA) is a signal peptide. The Extracellular portion of the chain corresponds to 37–323 (SNQPAGGGGD…VPSRQKLTHV (287 aa)). A glycan (N-linked (GlcNAc...) asparagine) is linked at asparagine 56. A Kazal-like 1 domain is found at 91–138 (ACQFQCHTNYIPVCGSNGDTYQNECFLRRAACKHQKDITVVARGPCYS). Intrachain disulfides connect cysteine 92–cysteine 122, cysteine 96–cysteine 115, and cysteine 104–cysteine 136. An N-linked (GlcNAc...) asparagine glycan is attached at asparagine 140. A disordered region spans residues 140 to 162 (NGSGSGEGEEEGSGAGAHRKHSK). Residues 182–230 (VCNIDCSGYSFNPVCASDGSSYNNPCFVREASCIRQEQIDIRHLGHCTD) enclose the Kazal-like 2 domain. 6 disulfide bridges follow: cysteine 183–cysteine 214, cysteine 187–cysteine 207, cysteine 196–cysteine 228, cysteine 268–cysteine 281, cysteine 276–cysteine 292, and cysteine 294–cysteine 303. Residues 264 to 304 (SHMPCPENLNGYCIHGKCEFIYSTQKASCRCESGYTGQHCE) form the EGF-like domain. A helical membrane pass occupies residues 324-344 (LIAAIIGAVQIAIIVAIVMCI). Over 345–373 (TRKCPKNNRGRRQKQNLGHFTSETSSRMV) the chain is Cytoplasmic. Residues 352-373 (NRGRRQKQNLGHFTSETSSRMV) are disordered. Residues 359 to 373 (QNLGHFTSETSSRMV) are compositionally biased toward polar residues.

Belongs to the tomoregulin family. In terms of assembly, may interact with ST14.

The protein localises to the cell membrane. Its function is as follows. Neuron-specific restriction factor that prevents herpes simplex virus 1 (HHV-1) infection in the brain by blocking viral entry. Also able to restrict herpes simplex virus 2 (HHV-2) infection, although to a lesser extent. Acts by preventing the association between the viral glycoprotein D (gD) and its cell surface receptor NECTIN1, thereby inhibiting fusion of the virus and the cell membrane. Also able to prevent the association between the viral glycoprotein B (gB) and MYH9/NMMHC-IIA and MYH10/NMMHC-IIB receptors. In Rattus norvegicus (Rat), this protein is Tomoregulin-1 (Tmeff1).